A 239-amino-acid chain; its full sequence is Demethylmenaquinone methyltransferase (239 aa).

S-adenosyl-L-methionine-binding positions include threonine 60, aspartate 81, and 106–107; that span reads DA.

This sequence belongs to the class I-like SAM-binding methyltransferase superfamily. MenG/UbiE family.

It carries out the reaction a 2-demethylmenaquinol + S-adenosyl-L-methionine = a menaquinol + S-adenosyl-L-homocysteine + H(+). Its pathway is quinol/quinone metabolism; menaquinone biosynthesis; menaquinol from 1,4-dihydroxy-2-naphthoate: step 2/2. In terms of biological role, methyltransferase required for the conversion of demethylmenaquinol (DMKH2) to menaquinol (MKH2). This Staphylococcus haemolyticus (strain JCSC1435) protein is Demethylmenaquinone methyltransferase.